A 152-amino-acid polypeptide reads, in one-letter code: ALK and LTK ligand 1 (152 aa).

Positions 1 to 23 are cleaved as a signal peptide; that stretch reads MRAEKRWHILLSMILLLITSSQC. Cystine bridges form between Cys113/Cys149 and Cys127/Cys136.

It belongs to the ALKAL family. In terms of tissue distribution, expressed at low level in the notochord and iridophore stripes, the eye and the swim bladder.

It localises to the secreted. The protein localises to the cell membrane. In terms of biological role, cytokine that acts as a physiological ligand for receptor tyrosine kinases LTK and ALK. Required for iridophore development in the adult eye by acting as a receptor for LTK. This chain is ALK and LTK ligand 1, found in Danio rerio (Zebrafish).